The following is a 298-amino-acid chain: GTPase Era (298 aa).

An Era-type G domain is found at 3–170 (KSGFVAILGR…VQLLKDNLEE (168 aa)). The G1 stretch occupies residues 11–18 (GRPNVGKS). 11–18 (GRPNVGKS) is a binding site for GTP. Positions 37-41 (QSTRN) are G2. Residues 58–61 (DTPG) form a G3 region. GTP-binding positions include 58 to 62 (DTPGI) and 120 to 123 (NKID). The segment at 120–123 (NKID) is G4. The G5 stretch occupies residues 149 to 151 (ISA). In terms of domain architecture, KH type-2 spans 201–279 (TQQEVPHSVA…YLETWVKVKK (79 aa)).

It belongs to the TRAFAC class TrmE-Era-EngA-EngB-Septin-like GTPase superfamily. Era GTPase family. As to quaternary structure, monomer.

The protein resides in the cytoplasm. It is found in the cell membrane. Functionally, an essential GTPase that binds both GDP and GTP, with rapid nucleotide exchange. Plays a role in 16S rRNA processing and 30S ribosomal subunit biogenesis and possibly also in cell cycle regulation and energy metabolism. The sequence is that of GTPase Era from Streptococcus equi subsp. zooepidemicus (strain H70).